Consider the following 226-residue polypeptide: ATP synthase subunit a (226 aa).

Helical transmembrane passes span 17–37 (FSYF…AMMA), 79–99 (LVAT…IPGF), 105–125 (SLNL…FEGI), 134–154 (FAHF…IEIV), 176–196 (LFLM…AYVL), and 199–219 (FMAF…LAGA).

Belongs to the ATPase A chain family. F-type ATPases have 2 components, CF(1) - the catalytic core - and CF(0) - the membrane proton channel. CF(1) has five subunits: alpha(3), beta(3), gamma(1), delta(1), epsilon(1). CF(0) has three main subunits: a(1), b(2) and c(9-12). The alpha and beta chains form an alternating ring which encloses part of the gamma chain. CF(1) is attached to CF(0) by a central stalk formed by the gamma and epsilon chains, while a peripheral stalk is formed by the delta and b chains.

It is found in the cell inner membrane. Functionally, key component of the proton channel; it plays a direct role in the translocation of protons across the membrane. This chain is ATP synthase subunit a, found in Campylobacter jejuni subsp. jejuni serotype O:23/36 (strain 81-176).